The chain runs to 3462 residues: DNA-directed RNA polymerase subunit beta'' (3462 aa).

Residues C263, C335, C342, and C345 each coordinate Zn(2+). The insert-1 stretch occupies residues 541-1085; it reads KIDDQELSSV…PNKIFSSNLF (545 aa). The tract at residues 1528-1585 is insert-2; that stretch reads PQSANERKQILKKARQKLRLFPLNLNEKKNRFSSVTLDLLRDQTTLHKMQSCGEAESG. The segment at 1602–1699 is insert-3; that stretch reads KKITEIFTFC…FSKQMGNRLL (98 aa). The tract at residues 1938–2168 is insert-4; it reads LKNKMNQSFS…SQASWILETN (231 aa). Residues 2320–2870 are insert-5; the sequence is NLVSGKLNFL…KKKIAKEGAF (551 aa). The interval 2972-3196 is insert-6; the sequence is SKSQRGWFHN…IGQLLRYGKE (225 aa).

Belongs to the RNA polymerase beta' chain family. RpoC2 subfamily. In plastids the minimal PEP RNA polymerase catalytic core is composed of four subunits: alpha, beta, beta', and beta''. When a (nuclear-encoded) sigma factor is associated with the core the holoenzyme is formed, which can initiate transcription. It depends on Zn(2+) as a cofactor.

Its subcellular location is the plastid. It localises to the chloroplast. The catalysed reaction is RNA(n) + a ribonucleoside 5'-triphosphate = RNA(n+1) + diphosphate. In terms of biological role, DNA-dependent RNA polymerase catalyzes the transcription of DNA into RNA using the four ribonucleoside triphosphates as substrates. This chain is DNA-directed RNA polymerase subunit beta'', found in Tupiella akineta (Green alga).